The sequence spans 141 residues: Nucleoside diphosphate kinase (141 aa).

Residues lysine 11, phenylalanine 59, arginine 87, threonine 93, arginine 104, and asparagine 114 each contribute to the ATP site. The active-site Pros-phosphohistidine intermediate is histidine 117.

The protein belongs to the NDK family. In terms of assembly, homotetramer. Requires Mg(2+) as cofactor.

It is found in the cytoplasm. It carries out the reaction a 2'-deoxyribonucleoside 5'-diphosphate + ATP = a 2'-deoxyribonucleoside 5'-triphosphate + ADP. The enzyme catalyses a ribonucleoside 5'-diphosphate + ATP = a ribonucleoside 5'-triphosphate + ADP. Major role in the synthesis of nucleoside triphosphates other than ATP. The ATP gamma phosphate is transferred to the NDP beta phosphate via a ping-pong mechanism, using a phosphorylated active-site intermediate. In Delftia acidovorans (strain DSM 14801 / SPH-1), this protein is Nucleoside diphosphate kinase.